The chain runs to 162 residues: Phosphopantetheine adenylyltransferase (162 aa).

Position 9 (Ser-9) interacts with substrate. ATP contacts are provided by residues 9–10 (SF) and His-17. Substrate contacts are provided by Lys-41, Ile-77, and Lys-91. ATP is bound by residues 92–94 (GLR), Glu-102, and 126–132 (YAFLSSS).

This sequence belongs to the bacterial CoaD family. As to quaternary structure, homohexamer. The cofactor is Mg(2+).

It localises to the cytoplasm. It catalyses the reaction (R)-4'-phosphopantetheine + ATP + H(+) = 3'-dephospho-CoA + diphosphate. Its pathway is cofactor biosynthesis; coenzyme A biosynthesis; CoA from (R)-pantothenate: step 4/5. Functionally, reversibly transfers an adenylyl group from ATP to 4'-phosphopantetheine, yielding dephospho-CoA (dPCoA) and pyrophosphate. The chain is Phosphopantetheine adenylyltransferase from Frankia casuarinae (strain DSM 45818 / CECT 9043 / HFP020203 / CcI3).